The following is a 401-amino-acid chain: tRNA(Ile)-lysidine synthase (401 aa).

Position 17 to 22 (17 to 22 (SGGPDS)) interacts with ATP.

It belongs to the tRNA(Ile)-lysidine synthase family.

The protein localises to the cytoplasm. It catalyses the reaction cytidine(34) in tRNA(Ile2) + L-lysine + ATP = lysidine(34) in tRNA(Ile2) + AMP + diphosphate + H(+). In terms of biological role, ligates lysine onto the cytidine present at position 34 of the AUA codon-specific tRNA(Ile) that contains the anticodon CAU, in an ATP-dependent manner. Cytidine is converted to lysidine, thus changing the amino acid specificity of the tRNA from methionine to isoleucine. The sequence is that of tRNA(Ile)-lysidine synthase from Mycoplasma mycoides subsp. mycoides SC (strain CCUG 32753 / NCTC 10114 / PG1).